Consider the following 397-residue polypeptide: Enoyl-[acyl-carrier-protein] reductase [NADH] (397 aa).

NAD(+) contacts are provided by residues 48 to 53, 74 to 75, 111 to 112, and 139 to 140; these read GASTGY, FE, DA, and LA. A substrate-binding site is contributed by Tyr-225. The active-site Proton donor is the Tyr-235. Residues Lys-244 and 273-275 contribute to the NAD(+) site; that span reads VVT.

This sequence belongs to the TER reductase family. In terms of assembly, monomer.

It catalyses the reaction a 2,3-saturated acyl-[ACP] + NAD(+) = a (2E)-enoyl-[ACP] + NADH + H(+). It participates in lipid metabolism; fatty acid biosynthesis. Functionally, involved in the final reduction of the elongation cycle of fatty acid synthesis (FAS II). Catalyzes the reduction of a carbon-carbon double bond in an enoyl moiety that is covalently linked to an acyl carrier protein (ACP). The chain is Enoyl-[acyl-carrier-protein] reductase [NADH] from Pseudoalteromonas translucida (strain TAC 125).